The sequence spans 208 residues: MVLVKICGVVRVEDAVLLDGVADYIGFIVEPTSPRSVKPEALRSLRDAVIKSRPVLVTATIPPKEAVDIAAKNEIPVVQYHSTLAPKDFDYAETRGVTLAPVAVYKPGIELKQLVEELLKTPHEYVLVDADKKSQERYEGGLKIPLTLLAEVAPLGRVALAGGITPENAQLIARLNPYMIDVASGVEASPGVKDMNKVKALLKAVGRL.

Belongs to the TrpF family.

It catalyses the reaction N-(5-phospho-beta-D-ribosyl)anthranilate = 1-(2-carboxyphenylamino)-1-deoxy-D-ribulose 5-phosphate. The protein operates within amino-acid biosynthesis; L-tryptophan biosynthesis; L-tryptophan from chorismate: step 3/5. The chain is N-(5'-phosphoribosyl)anthranilate isomerase (trpF) from Pyrobaculum aerophilum (strain ATCC 51768 / DSM 7523 / JCM 9630 / CIP 104966 / NBRC 100827 / IM2).